A 279-amino-acid polypeptide reads, in one-letter code: 3-methyl-2-oxobutanoate hydroxymethyltransferase (279 aa).

Aspartate 44 and aspartate 83 together coordinate Mg(2+). Residues 44–45 (DS), aspartate 83, and lysine 112 each bind 3-methyl-2-oxobutanoate. Residue glutamate 114 coordinates Mg(2+). Residue glutamate 180 is the Proton acceptor of the active site.

It belongs to the PanB family. Homodecamer; pentamer of dimers. It depends on Mg(2+) as a cofactor.

It is found in the cytoplasm. It catalyses the reaction 3-methyl-2-oxobutanoate + (6R)-5,10-methylene-5,6,7,8-tetrahydrofolate + H2O = 2-dehydropantoate + (6S)-5,6,7,8-tetrahydrofolate. The protein operates within cofactor biosynthesis; (R)-pantothenate biosynthesis; (R)-pantoate from 3-methyl-2-oxobutanoate: step 1/2. In terms of biological role, catalyzes the reversible reaction in which hydroxymethyl group from 5,10-methylenetetrahydrofolate is transferred onto alpha-ketoisovalerate to form ketopantoate. The protein is 3-methyl-2-oxobutanoate hydroxymethyltransferase of Chloroflexus aggregans (strain MD-66 / DSM 9485).